The chain runs to 739 residues: Adenosylcobalamin-dependent ribonucleoside-triphosphate reductase (739 aa).

A disulfide bridge connects residues Cys-119 and Cys-419. Residues 147–158 are effector region-1; sequence SMPFSFLFDELM. An effector region-2 region spans residues 168–313; sequence ARSNISQIPR…ICNLIGKAVV (146 aa). Residues Cys-408 and Glu-410 contribute to the active site. An adenosylcobalamin-binding-1 region spans residues 565–626; that stretch reads FHYGAYLIQR…NPNFASAGTV (62 aa). Residues 685 to 724 are adenosylcobalamin-binding-2; it reads LQQAPKEPIDKETYEKRSQEITGNVEEVFSQLNSDVKDLE.

The protein belongs to the class II ribonucleoside-triphosphate reductase family. Monomer. It depends on adenosylcob(III)alamin as a cofactor.

It catalyses the reaction a 2'-deoxyribonucleoside 5'-triphosphate + [thioredoxin]-disulfide + H2O = a ribonucleoside 5'-triphosphate + [thioredoxin]-dithiol. Allosterically regulated by ATP and dNTP. This Lactobacillus delbrueckii subsp. bulgaricus (strain ATCC 11842 / DSM 20081 / BCRC 10696 / JCM 1002 / NBRC 13953 / NCIMB 11778 / NCTC 12712 / WDCM 00102 / Lb 14) protein is Adenosylcobalamin-dependent ribonucleoside-triphosphate reductase (rtpR).